The primary structure comprises 407 residues: Imidazolonepropionase (407 aa).

Residues histidine 74 and histidine 76 each coordinate Fe(3+). 2 residues coordinate Zn(2+): histidine 74 and histidine 76. Residues arginine 83, tyrosine 146, and histidine 179 each contribute to the 4-imidazolone-5-propanoate site. Tyrosine 146 provides a ligand contact to N-formimidoyl-L-glutamate. Histidine 244 is a Fe(3+) binding site. Histidine 244 provides a ligand contact to Zn(2+). Glutamine 247 is a 4-imidazolone-5-propanoate binding site. A Fe(3+)-binding site is contributed by aspartate 319. Aspartate 319 serves as a coordination point for Zn(2+). Residues asparagine 321 and glycine 323 each coordinate N-formimidoyl-L-glutamate. Threonine 324 provides a ligand contact to 4-imidazolone-5-propanoate.

It belongs to the metallo-dependent hydrolases superfamily. HutI family. Requires Zn(2+) as cofactor. It depends on Fe(3+) as a cofactor.

It is found in the cytoplasm. It carries out the reaction 4-imidazolone-5-propanoate + H2O = N-formimidoyl-L-glutamate. Its pathway is amino-acid degradation; L-histidine degradation into L-glutamate; N-formimidoyl-L-glutamate from L-histidine: step 3/3. Catalyzes the hydrolytic cleavage of the carbon-nitrogen bond in imidazolone-5-propanoate to yield N-formimidoyl-L-glutamate. It is the third step in the universal histidine degradation pathway. The protein is Imidazolonepropionase of Salmonella paratyphi A (strain ATCC 9150 / SARB42).